Consider the following 405-residue polypeptide: Phosphoglycerate kinase (405 aa).

Substrate is bound by residues 21–23 (DFN), Arg-36, 59–62 (HLGR), Arg-119, and Arg-161. ATP is bound by residues Lys-212, Gly-301, Glu-332, and 361 to 364 (GGDS).

Belongs to the phosphoglycerate kinase family. In terms of assembly, monomer.

The protein localises to the cytoplasm. It catalyses the reaction (2R)-3-phosphoglycerate + ATP = (2R)-3-phospho-glyceroyl phosphate + ADP. The protein operates within carbohydrate degradation; glycolysis; pyruvate from D-glyceraldehyde 3-phosphate: step 2/5. The sequence is that of Phosphoglycerate kinase from Leuconostoc mesenteroides subsp. mesenteroides (strain ATCC 8293 / DSM 20343 / BCRC 11652 / CCM 1803 / JCM 6124 / NCDO 523 / NBRC 100496 / NCIMB 8023 / NCTC 12954 / NRRL B-1118 / 37Y).